Reading from the N-terminus, the 341-residue chain is Pectate trisaccharide-lyase (341 aa).

Positions 1–27 (MKKLISIIFIFVLGVVGSLTAAVSAEA) are cleaved as a signal peptide. Positions 28-39 (ASALNSGKVNPL) are excised as a propeptide. PbH1 repeat units follow at residues 131–156 (ANNI…GIEG) and 158–186 (SKNI…FDVK). 3 residues coordinate Ca(2+): D150, D180, and D184. Residue R233 is part of the active site. PbH1 repeat units lie at residues 262–283 (GARI…VSWY) and 287–322 (PGYW…SLDN).

Belongs to the polysaccharide lyase 1 family. It depends on Ca(2+) as a cofactor.

Its subcellular location is the secreted. The enzyme catalyses eliminative cleavage of unsaturated trigalacturonate as the major product from the reducing end of polygalacturonic acid/pectate.. In terms of biological role, cleaves unsaturated oligo-galacturonides from pectin. The major product is trigalacturonate; digalacturonate and tetragalacturonate are also produced. Activity on methylated pectins decreases with an increasing degree of methylation. The polypeptide is Pectate trisaccharide-lyase (Bacillus licheniformis (strain ATCC 14580 / DSM 13 / JCM 2505 / CCUG 7422 / NBRC 12200 / NCIMB 9375 / NCTC 10341 / NRRL NRS-1264 / Gibson 46)).